The primary structure comprises 358 residues: Type II methyltransferase M.HpaII (358 aa).

An SAM-dependent MTase C5-type domain is found at 32–356; that stretch reads FTFIDLFAGI…KKILEKLGNL (325 aa). Residue cysteine 103 is part of the active site.

This sequence belongs to the class I-like SAM-binding methyltransferase superfamily. C5-methyltransferase family. Monomer.

It catalyses the reaction a 2'-deoxycytidine in DNA + S-adenosyl-L-methionine = a 5-methyl-2'-deoxycytidine in DNA + S-adenosyl-L-homocysteine + H(+). Its function is as follows. A methylase that recognizes the double-stranded sequence 5'-CCGG-3', methylates C-2 on both strands, and protects the DNA from cleavage by the HpaII endonuclease. This is Type II methyltransferase M.HpaII from Haemophilus parainfluenzae.